Here is a 192-residue protein sequence, read N- to C-terminus: Ciliary microtubule-associated protein 3 (192 aa).

In terms of assembly, interacts with proteins involved in ciliary transport, including ARL13B, CETN1, KIF3A, RAB6A, RAB8A, TUBB1 and TUBG1. Interacts with AURKA.

It is found in the cytoplasmic vesicle. Its subcellular location is the golgi apparatus. The protein resides in the trans-Golgi network. The protein localises to the cytoplasm. Functionally, during primary cilia disassembly, involved in cilia disassembly. Required specifically to control cilia retraction as well as the liberation and duplication of the basal body/centrosome. May act by stimulating AURKA activity at the basal body in a cell cycle-dependent manner. This chain is Ciliary microtubule-associated protein 3 (CIMAP3), found in Bos taurus (Bovine).